The sequence spans 588 residues: Putative calcium-binding mitochondrial carrier F55A11.4 (588 aa).

Polar residues predominate over residues 1–14 (MINKNEQTESTSGA). Positions 1 to 25 (MINKNEQTESTSGAAEQKEDDEEQY) are disordered. EF-hand domains are found at residues 73–108 (EKERQIRDIYDRLDIDNDGTIDIRDLTLALKHETPH), 109–139 (IPANLAPVIMSKMSPDDEGRVDFYSFSSYVL), 140–175 (ENEQKLAEMFADMDRNHDGLVDVVEMKNYCKDIGVP), and 176–211 (LDDHKAQHIVNKMDQTGSASVDLKEFQEFMMLYPSS). Ca(2+) contacts are provided by Asp86, Asp88, Asp90, Thr92, and Asp97. Ca(2+) contacts are provided by Asp153, Asn155, Asp157, and Glu164. Solcar repeat units follow at residues 246-332 (GIWW…LKRL), 342-428 (ISTF…LKRT), and 440-529 (PGVL…VRTG). The next 6 helical transmembrane spans lie at 252–269 (LVAGGAAGAVSRTCTAPF), 307–326 (GNGINVIKIAPESAIKFMCY), 352–365 (SAAGAISQSTIYPM), 403–422 (GYLPNLIGIIPYAGIDLAIY), 446–463 (LACGTCSSTCGQLSSYPF), and 504–523 (GITPNFLKVIPAVSISYVVY).

The protein belongs to the mitochondrial carrier (TC 2.A.29) family. As to quaternary structure, homodimer (via N-terminus).

The protein resides in the mitochondrion inner membrane. Functionally, mitochondrial and calcium-binding carrier that catalyzes the calcium-dependent exchange of cytoplasmic glutamate with mitochondrial aspartate across the mitochondrial inner membrane. The protein is Putative calcium-binding mitochondrial carrier F55A11.4 of Caenorhabditis elegans.